A 1396-amino-acid polypeptide reads, in one-letter code: DNA-directed RNA polymerase subunit beta' (1396 aa).

The Zn(2+) site is built by C73, C75, C88, and C91. Residues D467, D469, and D471 each contribute to the Mg(2+) site. 4 residues coordinate Zn(2+): C817, C891, C898, and C901.

It belongs to the RNA polymerase beta' chain family. In terms of assembly, the RNAP catalytic core consists of 2 alpha, 1 beta, 1 beta' and 1 omega subunit. When a sigma factor is associated with the core the holoenzyme is formed, which can initiate transcription. Mg(2+) is required as a cofactor. Zn(2+) serves as cofactor.

The catalysed reaction is RNA(n) + a ribonucleoside 5'-triphosphate = RNA(n+1) + diphosphate. Its function is as follows. DNA-dependent RNA polymerase catalyzes the transcription of DNA into RNA using the four ribonucleoside triphosphates as substrates. This chain is DNA-directed RNA polymerase subunit beta', found in Orientia tsutsugamushi (strain Boryong) (Rickettsia tsutsugamushi).